Consider the following 188-residue polypeptide: Ribosome hibernation promotion factor (188 aa).

Residues 93–125 form a disordered region; the sequence is KTRVNRKKRKESEHEPFPATPETPPETAVDHDK.

This sequence belongs to the HPF/YfiA ribosome-associated protein family. Long HPF subfamily. As to quaternary structure, interacts with 100S ribosomes.

It is found in the cytoplasm. Functionally, required for dimerization of active 70S ribosomes into 100S ribosomes in stationary phase; 100S ribosomes are translationally inactive and sometimes present during exponential growth. The polypeptide is Ribosome hibernation promotion factor (Staphylococcus carnosus (strain TM300)).